Consider the following 307-residue polypeptide: Protoheme IX farnesyltransferase (307 aa).

The next 8 helical transmembrane spans lie at 24 to 44 (ISLL…VGLV), 52 to 72 (PVIA…AGAL), 115 to 135 (VVLG…TIFF), 152 to 172 (IVIG…AASG), 179 to 199 (VILV…LSLY), 224 to 244 (QILL…MLGE), 245 to 265 (AGLA…LLAV), and 284 to 304 (FGFS…EALV).

This sequence belongs to the UbiA prenyltransferase family. Protoheme IX farnesyltransferase subfamily.

Its subcellular location is the cell inner membrane. It catalyses the reaction heme b + (2E,6E)-farnesyl diphosphate + H2O = Fe(II)-heme o + diphosphate. The protein operates within porphyrin-containing compound metabolism; heme O biosynthesis; heme O from protoheme: step 1/1. Its function is as follows. Converts heme B (protoheme IX) to heme O by substitution of the vinyl group on carbon 2 of heme B porphyrin ring with a hydroxyethyl farnesyl side group. The protein is Protoheme IX farnesyltransferase of Azorhizobium caulinodans (strain ATCC 43989 / DSM 5975 / JCM 20966 / LMG 6465 / NBRC 14845 / NCIMB 13405 / ORS 571).